Reading from the N-terminus, the 328-residue chain is 4-hydroxythreonine-4-phosphate dehydrogenase (328 aa).

Thr-125 is a substrate binding site. A divalent metal cation-binding residues include His-160, His-203, and His-269. Substrate-binding residues include Lys-277, Asn-286, and Arg-295.

Belongs to the PdxA family. As to quaternary structure, homodimer. A divalent metal cation is required as a cofactor.

The protein localises to the cytoplasm. It catalyses the reaction 4-(phosphooxy)-L-threonine + NAD(+) = 3-amino-2-oxopropyl phosphate + CO2 + NADH. It participates in cofactor biosynthesis; pyridoxine 5'-phosphate biosynthesis; pyridoxine 5'-phosphate from D-erythrose 4-phosphate: step 4/5. Its function is as follows. Catalyzes the NAD(P)-dependent oxidation of 4-(phosphooxy)-L-threonine (HTP) into 2-amino-3-oxo-4-(phosphooxy)butyric acid which spontaneously decarboxylates to form 3-amino-2-oxopropyl phosphate (AHAP). The sequence is that of 4-hydroxythreonine-4-phosphate dehydrogenase from Synechococcus sp. (strain RCC307).